A 123-amino-acid polypeptide reads, in one-letter code: Potassium voltage-gated channel subfamily E member 2 (123 aa).

N-linked (GlcNAc...) asparagine glycans are attached at residues Asn-6 and Asn-29. A helical transmembrane segment spans residues 49-69 (VILYLMVMIGMFSFIVVAILV). The Cytoplasmic portion of the chain corresponds to 70–123 (STVKSKRREHSQHPYHQYIVEDWQEKYKSQILHLEDSKATIHENMGATGFTVSP).

The protein belongs to the potassium channel KCNE family. Interacts with KCNB1. Associates with KCNH2/ERG1. May associate with KCNQ2 and KCNQ3. Associates with HCN1 and probably HCN2. Heteromultimer with KCNC2. Interacts with KCNC2. Interacts with KCNQ1. Forms a heterooligomer complex with KCNQ1 that targets to the membrane raft and leading to currents with an apparently instantaneous activation, a rapid deactivation process and a linear current-voltage relationship and decreases the amplitude of the outward current.

It is found in the cell membrane. Its subcellular location is the apical cell membrane. Ancillary protein that functions as a regulatory subunit of the voltage-gated potassium (Kv) channel complex composed of pore-forming and potassium-conducting alpha subunits and of regulatory beta subunits. KCNE2 beta subunit modulates the gating kinetics and enhances stability of the channel complex. Alters the gating of the delayed rectifier Kv channel containing KCNB1 alpha subunit. Associates with KCNH2/HERG alpha subunit Kv channel to form the rapidly activating component of the delayed rectifying potassium current (IKr) in heart. May associate with KCNQ2 and/or KCNQ3 alpha subunits to modulate the native M-type current. May associate with HCN1 and HCN2 channel subunits to increase potassium current. Forms a heterooligomer complex with KCNQ1/KVLQT1 alpha subunits which leads to currents with an apparently instantaneous activation, a rapid deactivation process and a linear current-voltage relationship and decreases the amplitude of the outward current. KCNQ1-KCNE2 channel associates with Na(+)-coupled myo-inositol symporter in the apical membrane of choroid plexus epithelium and regulates the myo-inositol gradient between blood and cerebrospinal fluid with an impact on neuron excitability. In Mus musculus (Mouse), this protein is Potassium voltage-gated channel subfamily E member 2.